The following is a 412-amino-acid chain: Multifunctional CCA protein (412 aa).

2 residues coordinate ATP: Gly-8 and Arg-11. 2 residues coordinate CTP: Gly-8 and Arg-11. Mg(2+) contacts are provided by Asp-21 and Asp-23. ATP is bound by residues Arg-91, Arg-137, and Arg-140. CTP-binding residues include Arg-91, Arg-137, and Arg-140. The HD domain occupies 228 to 329 (TGIHTLMTLS…VKLFDSIDAW (102 aa)).

It belongs to the tRNA nucleotidyltransferase/poly(A) polymerase family. Bacterial CCA-adding enzyme type 1 subfamily. In terms of assembly, monomer. Can also form homodimers and oligomers. Mg(2+) is required as a cofactor. It depends on Ni(2+) as a cofactor.

The catalysed reaction is a tRNA precursor + 2 CTP + ATP = a tRNA with a 3' CCA end + 3 diphosphate. The enzyme catalyses a tRNA with a 3' CCA end + 2 CTP + ATP = a tRNA with a 3' CCACCA end + 3 diphosphate. Catalyzes the addition and repair of the essential 3'-terminal CCA sequence in tRNAs without using a nucleic acid template. Adds these three nucleotides in the order of C, C, and A to the tRNA nucleotide-73, using CTP and ATP as substrates and producing inorganic pyrophosphate. tRNA 3'-terminal CCA addition is required both for tRNA processing and repair. Also involved in tRNA surveillance by mediating tandem CCA addition to generate a CCACCA at the 3' terminus of unstable tRNAs. While stable tRNAs receive only 3'-terminal CCA, unstable tRNAs are marked with CCACCA and rapidly degraded. The polypeptide is Multifunctional CCA protein (Escherichia coli (strain SMS-3-5 / SECEC)).